Reading from the N-terminus, the 593-residue chain is Probable serine/threonine-protein kinase samkB (593 aa).

The 65-residue stretch at 29-93 (WNNEAVCEWL…SIFKKLKNNN (65 aa)) folds into the SAM domain. The interval 108-157 (ESNSINNSNNNNNNNNNNNNNNNNNNNNNNNNNNNNNNNNNNNNNNKIDT) is disordered. Positions 113–153 (NNSNNNNNNNNNNNNNNNNNNNNNNNNNNNNNNNNNNNNNN) are enriched in low complexity. The Protein kinase domain maps to 186–438 (YKLIEEIGRG…SKQLLEAQWF (253 aa)). Residues 192–200 (IGRGAFSIV) and Lys216 each bind ATP. The Proton acceptor role is filled by Asp313.

It belongs to the protein kinase superfamily. Ser/Thr protein kinase family.

The enzyme catalyses L-seryl-[protein] + ATP = O-phospho-L-seryl-[protein] + ADP + H(+). It carries out the reaction L-threonyl-[protein] + ATP = O-phospho-L-threonyl-[protein] + ADP + H(+). The chain is Probable serine/threonine-protein kinase samkB (samkB) from Dictyostelium discoideum (Social amoeba).